A 111-amino-acid chain; its full sequence is Large ribosomal subunit protein uL23 (111 aa).

The protein belongs to the universal ribosomal protein uL23 family. As to quaternary structure, part of the 50S ribosomal subunit. Contacts protein L29, and trigger factor when it is bound to the ribosome.

Its function is as follows. One of the early assembly proteins it binds 23S rRNA. One of the proteins that surrounds the polypeptide exit tunnel on the outside of the ribosome. Forms the main docking site for trigger factor binding to the ribosome. The sequence is that of Large ribosomal subunit protein uL23 from Nitrosospira multiformis (strain ATCC 25196 / NCIMB 11849 / C 71).